The sequence spans 1199 residues: DNA-directed RNA polymerase subunit beta' (1199 aa).

Cysteine 60, cysteine 62, cysteine 75, and cysteine 78 together coordinate Zn(2+). Residues aspartate 449, aspartate 451, and aspartate 453 each coordinate Mg(2+). Zn(2+)-binding residues include cysteine 818, cysteine 892, cysteine 899, and cysteine 902.

This sequence belongs to the RNA polymerase beta' chain family. The RNAP catalytic core consists of 2 alpha, 1 beta, 1 beta' and 1 omega subunit. When a sigma factor is associated with the core the holoenzyme is formed, which can initiate transcription. Requires Mg(2+) as cofactor. The cofactor is Zn(2+).

The catalysed reaction is RNA(n) + a ribonucleoside 5'-triphosphate = RNA(n+1) + diphosphate. Functionally, DNA-dependent RNA polymerase catalyzes the transcription of DNA into RNA using the four ribonucleoside triphosphates as substrates. The protein is DNA-directed RNA polymerase subunit beta' of Exiguobacterium sibiricum (strain DSM 17290 / CCUG 55495 / CIP 109462 / JCM 13490 / 255-15).